A 320-amino-acid polypeptide reads, in one-letter code: Cytochrome f (320 aa).

Residues 1-35 form the signal peptide; it reads MQTRKTFSWIKEEITRSISVLLMIYIITWASISNA. Residues Y36, C56, C59, and H60 each contribute to the heme site. The helical transmembrane segment at 286–306 threads the bilayer; that stretch reads VQGLLFFLASVILAQIFLVLK.

It belongs to the cytochrome f family. In terms of assembly, the 4 large subunits of the cytochrome b6-f complex are cytochrome b6, subunit IV (17 kDa polypeptide, petD), cytochrome f and the Rieske protein, while the 4 small subunits are PetG, PetL, PetM and PetN. The complex functions as a dimer. Heme serves as cofactor.

It is found in the plastid. Its subcellular location is the chloroplast thylakoid membrane. In terms of biological role, component of the cytochrome b6-f complex, which mediates electron transfer between photosystem II (PSII) and photosystem I (PSI), cyclic electron flow around PSI, and state transitions. The sequence is that of Cytochrome f from Manihot esculenta (Cassava).